A 151-amino-acid polypeptide reads, in one-letter code: Cytochrome c-type biogenesis protein CcmE (151 aa).

At 1 to 8 the chain is on the cytoplasmic side; it reads MNPLRRKR. The chain crosses the membrane as a helical; Signal-anchor for type II membrane protein span at residues 9–29; the sequence is LLIILAILVGVGIAVGLALSA. Residues 30 to 151 are Periplasmic-facing; the sequence is LQQNINLFYT…QSAPTPAKEG (122 aa). Residues H124 and Y128 each contribute to the heme site.

It belongs to the CcmE/CycJ family.

Its subcellular location is the cell inner membrane. Heme chaperone required for the biogenesis of c-type cytochromes. Transiently binds heme delivered by CcmC and transfers the heme to apo-cytochromes in a process facilitated by CcmF and CcmH. This chain is Cytochrome c-type biogenesis protein CcmE, found in Pseudomonas fluorescens (strain SBW25).